The chain runs to 226 residues: Lysoplasmalogenase TMEM86B (226 aa).

The Cytoplasmic portion of the chain corresponds to methionine 1 to arginine 23. The helical transmembrane segment at tryptophan 24 to isoleucine 40 threads the bilayer. Residues proline 41–serine 46 lie on the Extracellular side of the membrane. Residues tryptophan 47 to alanine 68 traverse the membrane as a helical segment. At proline 69–threonine 74 the chain is on the cytoplasmic side. Residues tryptophan 75 to tryptophan 93 traverse the membrane as a helical segment. At proline 94 to tyrosine 99 the chain is on the extracellular side. The chain crosses the membrane as a helical span at residues glycine 100–leucine 117. Residues threonine 118–glycine 123 lie on the Cytoplasmic side of the membrane. A helical transmembrane segment spans residues leucine 124 to leucine 140. The Extracellular segment spans residues leucine 141 to glycine 146. Residues methionine 147 to tryptophan 163 traverse the membrane as a helical segment. Over arginine 164 to serine 171 the chain is Cytoplasmic. A helical transmembrane segment spans residues alanine 172–tryptophan 188. Over aspartate 189–arginine 199 the chain is Extracellular. Residues leucine 200–leucine 218 form a helical membrane-spanning segment. The Cytoplasmic portion of the chain corresponds to arginine 219–histidine 226.

It belongs to the TMEM86 family. Homodimer. As to expression, enriched in liver. Also detected in brain and testis.

The protein resides in the endoplasmic reticulum membrane. The protein localises to the cytoplasm. It carries out the reaction a 1-O-(1Z-alkenyl)-sn-glycero-3-phosphocholine + H2O = a 2,3-saturated aldehyde + sn-glycerol 3-phosphocholine. It catalyses the reaction a 1-O-(1Z-alkenyl)-sn-glycero-3-phosphoethanolamine + H2O = a 2,3-saturated aldehyde + sn-glycero-3-phosphoethanolamine. Its activity is regulated as follows. Competitively inhibited by lysophosphatidic acid. Functionally, catalyzes the hydrolysis of the vinyl ether bond of choline or ethanolamine lysoplasmalogens, forming fatty aldehyde and glycerophosphocholine or glycerophosphoethanolamine, respectively and is specific for the sn-2-deacylated (lyso) form of plasmalogen. The sequence is that of Lysoplasmalogenase TMEM86B (Tmem86b) from Mus musculus (Mouse).